Here is a 462-residue protein sequence, read N- to C-terminus: MFSRTASKFRNTRRLLSTISSQIPGTRTSKLPNGLTIATEYIPNTSSATVGIFVDAGSRAENVKNNGTAHFLEHLAFKGTQNRSQQGIELEIENIGSHLNAYTSRENTVYYAKSLQEDIPKAVDILSDILTKSVLDNSAIERERDVIIRESEEVDKMYDEVVFDHLHEITYKDQPLGRTILGPIKNIKSITRTDLKDYITKNYKGDRMVLAGAGAVDHEKLVQYAQKYFGHVPKSESPVPLGSPRGPLPVFCRGERFIKENTLPTTHIAIALEGVSWSAPDYFVALATQAIVGNWDRAIGTGTNSPSPLAVAASQNGSLANSYMSFSTSYADSGLWGMYIVTDSNEHNVQLIVNEILKEWKRIKSGKISDAEVNRAKAQLKAALLLSLDGSTAIVEDIGRQVVTTGKRLSPEEVFEQVDKITKDDIIMWANYRLQNKPVSMVALGNTSTVPNVSYIEEKLNQ.

The transit peptide at 1-20 (MFSRTASKFRNTRRLLSTIS) directs the protein to the mitochondrion. His-70 serves as a coordination point for Zn(2+). Residue Glu-73 is the Proton acceptor of the active site. His-74 and Glu-150 together coordinate Zn(2+). At Ser-243 the chain carries Phosphoserine.

Belongs to the peptidase M16 family. As to quaternary structure, heterodimer of MAS2 (alpha) and MAS1 (beta) subunits, forming the mitochondrial processing protease (MPP) in which MAS2 is involved in substrate recognition and binding and MAS1 is the catalytic subunit. Requires Zn(2+) as cofactor.

The protein localises to the mitochondrion matrix. The catalysed reaction is Release of N-terminal transit peptides from precursor proteins imported into the mitochondrion, typically with Arg in position P2.. Its activity is regulated as follows. Binding to MAS2 is required for catalytic activity. Inhibited by high levels (&gt; 1uM) of zinc. Inhibited by metal chelators ethylenediaminetetraacetic acid (EDTA) and O-phenanthroline. Functionally, catalytic subunit of the essential mitochondrial processing protease (MPP), which cleaves the mitochondrial sequence off newly imported precursors proteins. Preferentially, cleaves after an arginine at position P2. The sequence is that of Mitochondrial-processing peptidase subunit beta from Saccharomyces cerevisiae (strain ATCC 204508 / S288c) (Baker's yeast).